Here is a 377-residue protein sequence, read N- to C-terminus: MSVLFTILLMAVIGGFIGAMTNYIAIRMLFRPYKAIYLFNKRLPFTPGLIPKRRDELAEHIGKVVVSHLLTEDAIRARLLDENLQKEITDTITKMFHEKMKLETTPNELLHHFGYENAEIRSMAWIEKTLEKEINHFLSTKKTTKMSDLIPTMLESELTTKLPHVTERITSKMTLFVASEEGKIQIKQMLQKFFEEHGKMGSMARMFINIDSFSEKIQQEGLKLIGQEDTKNLINQLLTTEWKNFEAKELQELIPTEKQAHLAGQLTSELIQTLPHEKLFNQPIQVILRGYEAAITEKVIPFAVERMLDFVATHSAEIVERMDLAKLVETQIATFSLPEIEKLVVEISGRELKMITYLGGILGGFIGIIQGILAMWI.

2 consecutive transmembrane segments (helical) span residues 1-21 (MSVLFTILLMAVIGGFIGAMT) and 357-377 (YLGGILGGFIGIIQGILAMWI).

Belongs to the UPF0754 family.

The protein resides in the cell membrane. The protein is UPF0754 membrane protein lmo2224 of Listeria monocytogenes serovar 1/2a (strain ATCC BAA-679 / EGD-e).